A 205-amino-acid chain; its full sequence is uncharacterized protein (205 aa).

Positions 10–75 form a coiled coil; it reads QDLLSAVDQQ…AANLMTVMTD (66 aa). Residues 108–141 form a disordered region; the sequence is MPLPSSNTNNDQTSPPASGKTSETPKKNPTNAMF. The span at 111 to 141 shows a compositional bias: polar residues; that stretch reads PSSNTNNDQTSPPASGKTSETPKKNPTNAMF.

It belongs to the asfivirus K205R family.

The protein resides in the host cytoplasm. Its function is as follows. Induces host endoplasmic reticulum stress and consequently activates autophagy and NF-kappa-B signaling pathway. In turn, may induce autophagy-mediated STING1 degradation and innate immune evasion. This is an uncharacterized protein from Ornithodoros (relapsing fever ticks).